Here is a 2151-residue protein sequence, read N- to C-terminus: Calpain-type cysteine protease DEK1 (2151 aa).

The signal sequence occupies residues 1-32 (MEGDERGVLLACVISGTLFTVFGSGSFWILWA). At 33-69 (VNWRPWRLYSWIFARKWPKVLQGPQLDILCGVLSLFA) the chain is on the extracellular side. A helical membrane pass occupies residues 70–90 (WIVVVSPIAILIGWGSWLIVI). The Cytoplasmic portion of the chain corresponds to 91–94 (LDRH). The chain crosses the membrane as a helical span at residues 95–115 (IIGLAIIMAGTALLLAFYSIM). Residues 116–126 (LWWRTQWQSSR) are Extracellular-facing. A helical membrane pass occupies residues 127 to 147 (AVALLLLLGVALLCAYELCAV). Residues 148-163 (YVTAGAHASQQYSPSG) are Cytoplasmic-facing. A helical transmembrane segment spans residues 164-184 (FFFGVSAIALAINMLFICRMV). At 185 to 235 (FNGNGLDVDEYVRRAYKFAYSDCIEVGPVACLPEPPDPNELYPRQTSRASH) the chain is on the extracellular side. A helical membrane pass occupies residues 236 to 256 (LGLLYLGSLVVLLAYSVLYGL). Over 257-263 (TARESRW) the chain is Cytoplasmic. The chain crosses the membrane as a helical span at residues 264–284 (LGGITSAAVIVLDWNIGACLY). The Extracellular segment spans residues 285–293 (GFKLLQNRV). The helical transmembrane segment at 294–314 (LALFVAGISRLFLICFGIHYW) threads the bilayer. Residues 315–319 (YLGHC) are Cytoplasmic-facing. A helical transmembrane segment spans residues 320–340 (ISYIFVASVLSGAAVSRHLSI). At 341–615 (TDPSAARRDA…LLLHHVAGTP (275 aa)) the chain is on the extracellular side. Disordered regions lie at residues 363–393 (RRKE…GHTG) and 405–442 (CTAD…SCRS). The span at 369-388 (SSSSSSDGCGSSIKRSSSID) shows a compositional bias: low complexity. Residues 405–420 (CTADNLTRTGSSQEGI) are compositionally biased toward polar residues. Over residues 430 to 442 (RPSLGLRSSSCRS) the composition is skewed to low complexity. Residues 616–636 (ERAWGLFSLVFILETIIVAIF) traverse the membrane as a helical segment. Topologically, residues 637 to 652 (RPKTITIINSSHQQFE) are cytoplasmic. A helical membrane pass occupies residues 653–673 (FGFSVLLLSPVVCSIMAFLRS). Topologically, residues 674–686 (LQVEEMALTSKSR) are extracellular. The helical transmembrane segment at 687–707 (KYGFVAWLLSTSVGLSLSFLS) threads the bilayer. Topologically, residues 708-711 (KSSV) are cytoplasmic. A helical membrane pass occupies residues 712-732 (LLGISLTVPLMAACLSIAVPI). The Extracellular segment spans residues 733–760 (WMHNGYQFWVPQLSCGDQARDLRSPRIK). The helical transmembrane segment at 761–782 (GFILWICVVLFAGSVISLGAII) threads the bilayer. The Cytoplasmic segment spans residues 783 to 813 (SAKPLDDLKYKLFSARENNVTSPYTSSVYLG). Residues 814–834 (WAMSSGIALVVTAILPIVSWF) traverse the membrane as a helical segment. Topologically, residues 835-844 (ATYRFSHSSA) are extracellular. The chain crosses the membrane as a helical span at residues 845 to 865 (VCLMIFSVVLVAFCGTSYLEV). Over 866–878 (VKSRDDQLPTKGD) the chain is Cytoplasmic. A helical membrane pass occupies residues 879–899 (FLAALLPLACIPALLSLCCGM). Over 900–912 (VKWKDDCWILSRG) the chain is Extracellular. A helical transmembrane segment spans residues 913–933 (VYVFFSIGLLLLFGAIAAVIA). At 934-936 (VKP) the chain is on the cytoplasmic side. The helical transmembrane segment at 937-957 (WTIGVSFLLVLFLMVVTIGVI) threads the bilayer. Residues 958 to 971 (HLWASNNFYLTRKQ) are Extracellular-facing. The chain crosses the membrane as a helical span at residues 972–992 (TSFVCFLALLLGLAAFLLGWH). The Cytoplasmic portion of the chain corresponds to 993–1006 (QDKAFAGASVGYFT). The helical transmembrane segment at 1007–1027 (FLSLLAGRALAVLLSPPIVVY) threads the bilayer. Over 1028–1050 (SPRVLPVYVYDAHADCGKNVSAA) the chain is Extracellular. The chain crosses the membrane as a helical span at residues 1051–1071 (FLVLYGIALATEGWGVVASLI). Topologically, residues 1072–2151 (IYPPFAGAAV…TKASIVLEAL (1080 aa)) are cytoplasmic. Calpain catalytic domains lie at 1407 to 1600 (SGKH…DMID) and 1695 to 1997 (QFTD…CRVY). Active-site residues include Cys-1761, His-1919, and Asn-1939.

The protein belongs to the peptidase C2 family. Post-translationally, autocatalytic proteolytic cleavage leading to the production of mainly cytoplasmic localized subproducts of about 85 and 120 kDa. In terms of tissue distribution, mostly expressed in meristems and organ primordia. Expressed at low levels in young and germinating seeds at 10 ppm and in seedling roots at 67 ppm. Present in most tissues at a low level.

The protein resides in the cell membrane. It localises to the endosome membrane. It is found in the endoplasmic reticulum membrane. Its subcellular location is the cytoplasm. In terms of biological role, essential protease involved in epiderm development. Required for aleurone cell development in the endosperm probably by maintaining and restricting the aleurone and embryonic epidermal L1 cell-layer fates as well as meristems organization. Involved in the maintenance of adaxial/abaxial axis information in developing leaves, probably by regulating cell proliferation and expansion. Does not need calcium ions to be active. Required for the formation of giant cells in sepals by determining cell fate and promoting endoreplication. The protein is Calpain-type cysteine protease DEK1 of Arabidopsis thaliana (Mouse-ear cress).